The chain runs to 324 residues: tRNA pseudouridine synthase B (324 aa).

The active-site Nucleophile is the D49. The interval 87 to 107 is disordered; sequence RSTDDLEGQPTKTSDKRPSRE.

It belongs to the pseudouridine synthase TruB family. Type 1 subfamily.

It carries out the reaction uridine(55) in tRNA = pseudouridine(55) in tRNA. Functionally, responsible for synthesis of pseudouridine from uracil-55 in the psi GC loop of transfer RNAs. This Brucella canis (strain ATCC 23365 / NCTC 10854 / RM-666) protein is tRNA pseudouridine synthase B.